A 604-amino-acid chain; its full sequence is Sulfite reductase [NADPH] flavoprotein alpha-component (604 aa).

The Flavodoxin-like domain maps to V65–L203. FMN is bound by residues S71 to G76, S118 to G121, and L154 to C163. In terms of domain architecture, FAD-binding FR-type spans Q236–P453. Residues T324, L358, R392–S395, T410–A412, and G425–S428 each bind FAD. NADP(+) contacts are provided by residues S524–R525, K530–Q534, and D566. Y604 is an FAD binding site.

It belongs to the NADPH-dependent sulphite reductase flavoprotein subunit CysJ family. This sequence in the N-terminal section; belongs to the flavodoxin family. The protein in the C-terminal section; belongs to the flavoprotein pyridine nucleotide cytochrome reductase family. In terms of assembly, alpha(8)-beta(8). The alpha component is a flavoprotein, the beta component is a hemoprotein. FAD serves as cofactor. FMN is required as a cofactor.

It carries out the reaction hydrogen sulfide + 3 NADP(+) + 3 H2O = sulfite + 3 NADPH + 4 H(+). It functions in the pathway sulfur metabolism; hydrogen sulfide biosynthesis; hydrogen sulfide from sulfite (NADPH route): step 1/1. Its function is as follows. Component of the sulfite reductase complex that catalyzes the 6-electron reduction of sulfite to sulfide. This is one of several activities required for the biosynthesis of L-cysteine from sulfate. The flavoprotein component catalyzes the electron flow from NADPH -&gt; FAD -&gt; FMN to the hemoprotein component. This chain is Sulfite reductase [NADPH] flavoprotein alpha-component, found in Shewanella sp. (strain ANA-3).